The chain runs to 127 residues: I-Kappa-B like protein J1 (127 aa).

ANK repeat units follow at residues 43 to 76 and 81 to 111; these read HGNTCLHIATEEHRGRQAIWLIEKLVEYGADLDE and DGDTVLHMAVKKGDYKLATWMCQQLSMRFGS.

This sequence belongs to the polydnaviridae I-Kappa-B-like protein family.

Its function is as follows. Suppresses the host immune response through NF-kappa-B inactivation. Possesses ankyrin repeat domains required for NF-kappa-B binding but lacks the regulatory regions required for dissociation from NF-kappa-B and degradation. Therefore, prevents host NF-kappa-B release and subsequent activation. The sequence is that of I-Kappa-B like protein J1 (J2) from Microplitis demolitor (Parasitoid wasp).